The chain runs to 463 residues: Golgi-associated PDZ and coiled-coil motif-containing protein (463 aa).

At S2 the chain carries N-acetylserine. Positions 85–201 form a coiled coil; it reads AQTVSQINHK…RHIAVLQAEV (117 aa). The PDZ domain occupies 289–372; it reads KVLLLKEDHE…EIEFEVVYVA (84 aa). Phosphoserine occurs at positions 402 and 405.

Homooligomer. Interacts with FZD5. Interacts with FZD8. Interacts with GRID2 and BECN1. Interacts with CSPG5. Interacts with CLCN3. Interacts with STX6. Interacts with CFTR. Interacts with ASIC3. Interacts with GOLGA3. Interacts with NLGN1. Interacts with RHOQ. Interacts with MARCHF2; the interaction leads to CFTR ubiquitination and degradation. May interact with CACNG2. Interacts with CCDC62. In terms of tissue distribution, ubiquitously expressed (at protein level). Expressed in dorsal root glanglion (DRG), spinal cord and brain. Isoform 1 is preferentially expressed in whole brain (at protein level) and cerebellum. Expressed in spermatocytes and spermatides but not in Sertoli cells and spermatogonia.

The protein resides in the cytoplasm. The protein localises to the golgi apparatus membrane. It localises to the golgi apparatus. Its subcellular location is the trans-Golgi network membrane. It is found in the synapse. The protein resides in the postsynaptic density. The protein localises to the cell projection. It localises to the dendrite. Plays a role in intracellular protein trafficking and degradation. May regulate CFTR chloride currents and acid-induced ASIC3 currents by modulating cell surface expression of both channels. May also regulate the intracellular trafficking of the ADR1B receptor. May play a role in autophagy. Together with MARCHF2 mediates the ubiquitination and lysosomal degradation of CFTR. Overexpression results in CFTR intracellular retention and degradation in the lysosomes. The chain is Golgi-associated PDZ and coiled-coil motif-containing protein from Mus musculus (Mouse).